The sequence spans 355 residues: Chemerin-like receptor 2 (355 aa).

The Extracellular segment spans residues 1–41 (MEDLEETLFEEFENYSYALDYYSLESDLEEKVQLGVVHWVS). N-linked (GlcNAc...) asparagine glycosylation is present at asparagine 14. Residues 42–62 (LVLYCLSFVLGIPGNAIVIWF) form a helical membrane-spanning segment. Residues 63-73 (TGFKWKKTVST) are Cytoplasmic-facing. The chain crosses the membrane as a helical span at residues 74-94 (LWFLNLAIADFIFLLFLPLYI). Residues 95–112 (SYVVMNFHWPFGIWLCKA) are Extracellular-facing. A disulfide bond links cysteine 110 and cysteine 187. A helical transmembrane segment spans residues 113–133 (NSFTAQLNMFASVFFLTVISL). Over 134–154 (DHYIHLIHPVLSHRHRTLKNS) the chain is Cytoplasmic. Residues 155 to 175 (LIVIIFIWLLASLIGGPALYF) traverse the membrane as a helical segment. The Extracellular portion of the chain corresponds to 176-210 (RDTVEFNNHTLCYNNFQKHDPDLTVIRHHVLTWVK). A helical transmembrane segment spans residues 211–231 (FIVGYLFPLLTMSICYLCLIF). Residues 232-247 (KVKKRSILISSRHFWT) are Cytoplasmic-facing. Residues 248–268 (ILAVVVAFVVCWTPYHLFSIW) form a helical membrane-spanning segment. Residues 269-286 (ELTIHHNSYSHHVMQAGI) are Extracellular-facing. Residues 287 to 307 (PLSTGLAFLNSCLNPILYVLI) form a helical membrane-spanning segment. Topologically, residues 308–355 (SKKFQARFRSSVAEILKYTLWEVSCSGTVSEQLRNSETKNLCLLETAQ) are cytoplasmic.

Belongs to the chemokine-like receptor (CMKLR) family.

Its subcellular location is the cell membrane. Receptor for chemoattractant adipokine chemerin/RARRES2 suggesting a role for this receptor in the regulation of inflammation and energy homesotasis. Signals mainly via beta-arrestin pathway. Binding of RARRES2 activates weakly G proteins, calcium mobilization and MAPK1/MAPK3 (ERK1/2) phosphorylation too. Acts also as a receptor for TAFA1, mediates its effects on neuronal stem-cell proliferation and differentiation via the activation of ROCK/ERK and ROCK/STAT3 signaling pathway. In Macaca mulatta (Rhesus macaque), this protein is Chemerin-like receptor 2 (CMKLR2).